The following is an 87-amino-acid chain: Large ribosomal subunit protein bL27 (87 aa).

The segment covering 1 to 11 has biased composition (polar residues); sequence MASKASGGSTR. The disordered stretch occupies residues 1–21; that stretch reads MASKASGGSTRNGRDSNSKRL.

Belongs to the bacterial ribosomal protein bL27 family.

The chain is Large ribosomal subunit protein bL27 from Hydrogenobaculum sp. (strain Y04AAS1).